The primary structure comprises 366 residues: tRNA/tmRNA (uracil-C(5))-methyltransferase (366 aa).

S-adenosyl-L-methionine-binding residues include Gln-189, Tyr-217, Asn-222, Glu-238, and Asp-298. Cys-323 functions as the Nucleophile in the catalytic mechanism. Catalysis depends on Glu-357, which acts as the Proton acceptor.

This sequence belongs to the class I-like SAM-binding methyltransferase superfamily. RNA M5U methyltransferase family. TrmA subfamily.

It catalyses the reaction uridine(54) in tRNA + S-adenosyl-L-methionine = 5-methyluridine(54) in tRNA + S-adenosyl-L-homocysteine + H(+). The catalysed reaction is uridine(341) in tmRNA + S-adenosyl-L-methionine = 5-methyluridine(341) in tmRNA + S-adenosyl-L-homocysteine + H(+). Functionally, dual-specificity methyltransferase that catalyzes the formation of 5-methyluridine at position 54 (m5U54) in all tRNAs, and that of position 341 (m5U341) in tmRNA (transfer-mRNA). This Idiomarina loihiensis (strain ATCC BAA-735 / DSM 15497 / L2-TR) protein is tRNA/tmRNA (uracil-C(5))-methyltransferase.